The sequence spans 617 residues: MALVGSRVELDADEDIFEDALETISRSPSDMATSGFHFVPCDTKRTSRQLGAPAVGRAEGSSAKVDLKSGLEECAAALNLFLSNRFKDALELLRPWAKESMYHALGYSTIVVLQAVMTFEQQDIQNGISAMKDALQTCQKYRKKCTVVESFSSLLSRGSLEQLSEEEMHAEICYAECLLQKAALTFVQDENMINFIKGGLKIRTSYQIYKECLSILHVIQKNKEEQHFFYEFEGGVKLGTGAFNLMLSLLPARIIRLLEFIGFSGNRDLGLLQLREGASGSSMRSPLCCLTILAFHTYISLILGTGEVNVAEAESLLAPFLQQFPNGSLILFYHARIELLKGNAEKAQETFRKCISVQEEWKQFHHLCYWELMWIYIYQQNWMQAYYYSDLLCKESKWSKATYVFLKAAILSMLPEEEVAVTKENVVSLFRQVDGLKQRIAGKSLPTEKFAVRKARRYSPSSGVPGKLVLPALEMMYVWNGFSIVGKRKDLSENLLVTVEKAEEALQNQNFTDYSVDDECLVKLLKGCCLKNLQRPLQAELCFNHVLESEKLLKYDHYLVPFTLFELAFLYKSQGEIDKAIKVLETARNNYKDYSLESRLHFRIQAALHLWKKPSSD.

TPR repeat units lie at residues 328 to 361 and 561 to 594; these read SLIL…QEEW and PFTL…YKDY.

This sequence belongs to the TTC39 family.

Regulates high density lipoprotein (HDL) cholesterol metabolism by promoting the ubiquitination and degradation of the oxysterols receptors LXR (NR1H2 and NR1H3). In Rattus norvegicus (Rat), this protein is Tetratricopeptide repeat protein 39B (Ttc39b).